A 311-amino-acid chain; its full sequence is Transmembrane protein 177 (311 aa).

The Mitochondrial matrix segment spans residues 1–17 (MAGPLWRTAAFVQRHRT). The chain crosses the membrane as a helical span at residues 18 to 38 (GLLVGSCAGLFGVPISYHLFP). The Mitochondrial intermembrane segment spans residues 39–166 (DPVVQWLYQY…EVVYLESSTT (128 aa)). Residues 167 to 187 (AVHALLAPACLAGTWALGVGA) form a helical membrane-spanning segment. Residues 188–197 (KYTLGLHAGP) are Mitochondrial matrix-facing. A helical transmembrane segment spans residues 198 to 218 (MNLRAAFSLVAAVAGFVAYAF). The Mitochondrial intermembrane portion of the chain corresponds to 219-311 (SQDSLTHAVE…WRGMLNPGRS (93 aa)).

It belongs to the TMEM177 family. Found in a complex with COX20, COA6, MT-CO2/COX2, COX18, SCO1 and SCO2. Interacts with COX20. Interacts with COX1, MT-CO2/COX2, SCO1 and SCO2 in a COX20-dependent manner.

The protein resides in the mitochondrion inner membrane. In terms of biological role, plays a role in the early steps of cytochrome c oxidase subunit II (MT-CO2/COX2) maturation and is required for the stabilization of COX20 and the newly synthesized MT-CO2/COX2 protein. In Homo sapiens (Human), this protein is Transmembrane protein 177 (TMEM177).